A 131-amino-acid polypeptide reads, in one-letter code: Protein E11 homolog (131 aa).

This sequence belongs to the chordopoxvirinae E11 family.

It localises to the virion. The polypeptide is Protein E11 homolog (Fowlpox virus (strain NVSL) (FPV)).